The primary structure comprises 261 residues: Tryptophan synthase alpha chain (261 aa).

Active-site proton acceptor residues include glutamate 47 and aspartate 58.

The protein belongs to the TrpA family. In terms of assembly, tetramer of two alpha and two beta chains.

It catalyses the reaction (1S,2R)-1-C-(indol-3-yl)glycerol 3-phosphate + L-serine = D-glyceraldehyde 3-phosphate + L-tryptophan + H2O. Its pathway is amino-acid biosynthesis; L-tryptophan biosynthesis; L-tryptophan from chorismate: step 5/5. The alpha subunit is responsible for the aldol cleavage of indoleglycerol phosphate to indole and glyceraldehyde 3-phosphate. This chain is Tryptophan synthase alpha chain, found in Neisseria meningitidis serogroup A / serotype 4A (strain DSM 15465 / Z2491).